A 134-amino-acid chain; its full sequence is D-ribose pyranase (134 aa).

The active-site Proton donor is His20. Substrate contacts are provided by residues Asp28, His101, and 123-125 (YCN).

It belongs to the RbsD / FucU family. RbsD subfamily. Homodecamer.

It is found in the cytoplasm. The catalysed reaction is beta-D-ribopyranose = beta-D-ribofuranose. Its pathway is carbohydrate metabolism; D-ribose degradation; D-ribose 5-phosphate from beta-D-ribopyranose: step 1/2. In terms of biological role, catalyzes the interconversion of beta-pyran and beta-furan forms of D-ribose. This Pseudomonas fluorescens (strain SBW25) protein is D-ribose pyranase.